Here is a 64-residue protein sequence, read N- to C-terminus: DNA-binding protein 7b (64 aa).

An N6-methyllysine mark is found at lysine 5 and lysine 7.

It belongs to the 7 kDa DNA-binding/endoribonuclease P2 family. As to quaternary structure, monomer. In terms of processing, lys-5 and Lys-7 may be methylated.

It is found in the cytoplasm. Functionally, can constrain negative DNA supercoils. May be involved in maintaining the integrity of the genome at high temperature. This is DNA-binding protein 7b from Saccharolobus shibatae (strain ATCC 51178 / DSM 5389 / JCM 8931 / NBRC 15437 / B12) (Sulfolobus shibatae).